Consider the following 234-residue polypeptide: Opacity protein opA56 (234 aa).

A signal peptide is located at residue Ala-1.

Belongs to the opacity porin family.

It localises to the cell outer membrane. Its function is as follows. Implicated in a number of adherence functions. OPA proteins are implicated in pathogenesis and are subject to phase variation. In Neisseria gonorrhoeae, this protein is Opacity protein opA56 (opaF).